The chain runs to 273 residues: Putative phosphoenolpyruvate synthase regulatory protein (273 aa).

153–160 (AVSRAGKT) is a binding site for ADP.

The protein belongs to the pyruvate, phosphate/water dikinase regulatory protein family. PSRP subfamily.

It catalyses the reaction [pyruvate, water dikinase] + ADP = [pyruvate, water dikinase]-phosphate + AMP + H(+). The catalysed reaction is [pyruvate, water dikinase]-phosphate + phosphate + H(+) = [pyruvate, water dikinase] + diphosphate. Bifunctional serine/threonine kinase and phosphorylase involved in the regulation of the phosphoenolpyruvate synthase (PEPS) by catalyzing its phosphorylation/dephosphorylation. In Xylella fastidiosa (strain M12), this protein is Putative phosphoenolpyruvate synthase regulatory protein.